A 519-amino-acid chain; its full sequence is Histidine ammonia-lyase (519 aa).

Positions 146–148 form a cross-link, 5-imidazolinone (Ala-Gly); it reads ASG. At Ser-147 the chain carries 2,3-didehydroalanine (Ser).

The protein belongs to the PAL/histidase family. Post-translationally, contains an active site 4-methylidene-imidazol-5-one (MIO), which is formed autocatalytically by cyclization and dehydration of residues Ala-Ser-Gly.

The protein localises to the cytoplasm. The catalysed reaction is L-histidine = trans-urocanate + NH4(+). Its pathway is amino-acid degradation; L-histidine degradation into L-glutamate; N-formimidoyl-L-glutamate from L-histidine: step 1/3. This Bradyrhizobium diazoefficiens (strain JCM 10833 / BCRC 13528 / IAM 13628 / NBRC 14792 / USDA 110) protein is Histidine ammonia-lyase.